The sequence spans 391 residues: Deoxyguanosinetriphosphate triphosphohydrolase-like protein (391 aa).

One can recognise an HD domain in the interval 62-198 (RLTHSLEVST…ASLADDISYI (137 aa)).

This sequence belongs to the dGTPase family. Type 2 subfamily.

This chain is Deoxyguanosinetriphosphate triphosphohydrolase-like protein, found in Rickettsia akari (strain Hartford).